Here is a 178-residue protein sequence, read N- to C-terminus: Interleukin-10 (178 aa).

The signal sequence occupies residues 1 to 18 (MPRSALLCCLILLAGVAA). Intrachain disulfides connect C30-C126 and C80-C132. N-linked (GlcNAc...) asparagine glycosylation occurs at N134.

Belongs to the IL-10 family. Homodimer. Interacts with IL10RA and IL10RB.

It localises to the secreted. Major immune regulatory cytokine that acts on many cells of the immune system where it has profound anti-inflammatory functions, limiting excessive tissue disruption caused by inflammation. Mechanistically, IL10 binds to its heterotetrameric receptor comprising IL10RA and IL10RB leading to JAK1 and STAT2-mediated phosphorylation of STAT3. In turn, STAT3 translocates to the nucleus where it drives expression of anti-inflammatory mediators. Targets antigen-presenting cells (APCs) such as macrophages and monocytes and inhibits their release of pro-inflammatory cytokines including granulocyte-macrophage colony-stimulating factor /GM-CSF, granulocyte colony-stimulating factor/G-CSF, IL-1 alpha, IL-1 beta, IL-6, IL-8 and TNF-alpha. Also interferes with antigen presentation by reducing the expression of MHC-class II and co-stimulatory molecules, thereby inhibiting their ability to induce T cell activation. In addition, controls the inflammatory response of macrophages by reprogramming essential metabolic pathways including mTOR signaling. The protein is Interleukin-10 (IL10) of Lama glama (Llama).